The sequence spans 128 residues: Small ribosomal subunit protein uS14m (128 aa).

Belongs to the universal ribosomal protein uS14 family. Component of the mitochondrial small ribosomal subunit (mt-SSU). Mature mammalian 55S mitochondrial ribosomes consist of a small (28S) and a large (39S) subunit. The 28S small subunit contains a 12S ribosomal RNA (12S mt-rRNA) and 30 different proteins. The 39S large subunit contains a 16S rRNA (16S mt-rRNA), a copy of mitochondrial valine transfer RNA (mt-tRNA(Val)), which plays an integral structural role, and 52 different proteins. Interacts with LIAT1.

It localises to the mitochondrion. The protein is Small ribosomal subunit protein uS14m of Homo sapiens (Human).